A 480-amino-acid chain; its full sequence is Adenosylmethionine-8-amino-7-oxononanoate aminotransferase (480 aa).

126–127 contributes to the pyridoxal 5'-phosphate binding site; the sequence is GS. A substrate-binding site is contributed by Y160. D270 provides a ligand contact to pyridoxal 5'-phosphate. K314 carries the N6-(pyridoxal phosphate)lysine modification. G350 provides a ligand contact to substrate. Position 351 to 352 (351 to 352) interacts with pyridoxal 5'-phosphate; that stretch reads PT. Residue R441 coordinates substrate.

This sequence belongs to the class-III pyridoxal-phosphate-dependent aminotransferase family. BioA subfamily. The cofactor is pyridoxal 5'-phosphate.

The enzyme catalyses (8S)-8-amino-7-oxononanoate + S-adenosyl-L-methionine = S-adenosyl-4-methylsulfanyl-2-oxobutanoate + (7R,8S)-7,8-diammoniononanoate. It functions in the pathway cofactor biosynthesis; biotin biosynthesis; 7,8-diaminononanoate from 8-amino-7-oxononanoate (SAM route): step 1/1. In terms of biological role, catalyzes the transfer of the alpha-amino group from S-adenosyl-L-methionine (SAM) to 7-keto-8-aminopelargonic acid (KAPA) to form 7,8-diaminopelargonic acid (DAPA). It is the only aminotransferase known to utilize SAM as an amino donor. The chain is Adenosylmethionine-8-amino-7-oxononanoate aminotransferase from Saccharomyces cerevisiae (strain ATCC 204508 / S288c) (Baker's yeast).